Consider the following 258-residue polypeptide: Protein T1 (258 aa).

A signal peptide spans 1–17; sequence MRRLCIILLVYVYATFA. N-linked (GlcNAc...) asparagine; by host glycosylation is found at asparagine 67, asparagine 151, and asparagine 172.

Belongs to the poxviruses A41 family.

In Rabbit fibroma virus (strain Kasza) (RFV), this protein is Protein T1.